The following is a 447-amino-acid chain: Na(+)-translocating NADH-quinone reductase subunit A (447 aa).

This sequence belongs to the NqrA family. In terms of assembly, composed of six subunits; NqrA, NqrB, NqrC, NqrD, NqrE and NqrF.

It catalyses the reaction a ubiquinone + n Na(+)(in) + NADH + H(+) = a ubiquinol + n Na(+)(out) + NAD(+). In terms of biological role, NQR complex catalyzes the reduction of ubiquinone-1 to ubiquinol by two successive reactions, coupled with the transport of Na(+) ions from the cytoplasm to the periplasm. NqrA to NqrE are probably involved in the second step, the conversion of ubisemiquinone to ubiquinol. The chain is Na(+)-translocating NADH-quinone reductase subunit A from Hahella chejuensis (strain KCTC 2396).